A 156-amino-acid polypeptide reads, in one-letter code: Ribosomal RNA large subunit methyltransferase H (156 aa).

S-adenosyl-L-methionine is bound by residues Leu72, Gly103, and 122-127; that span reads LSSLTL.

The protein belongs to the RNA methyltransferase RlmH family. Homodimer.

It localises to the cytoplasm. It catalyses the reaction pseudouridine(1915) in 23S rRNA + S-adenosyl-L-methionine = N(3)-methylpseudouridine(1915) in 23S rRNA + S-adenosyl-L-homocysteine + H(+). Specifically methylates the pseudouridine at position 1915 (m3Psi1915) in 23S rRNA. The chain is Ribosomal RNA large subunit methyltransferase H from Dechloromonas aromatica (strain RCB).